Reading from the N-terminus, the 129-residue chain is Transcription antitermination protein NusB (129 aa).

The protein belongs to the NusB family.

Its function is as follows. Involved in transcription antitermination. Required for transcription of ribosomal RNA (rRNA) genes. Binds specifically to the boxA antiterminator sequence of the ribosomal RNA (rrn) operons. The protein is Transcription antitermination protein NusB of Staphylococcus aureus (strain N315).